The following is a 103-amino-acid chain: Small ribosomal subunit protein uS10 (103 aa).

Belongs to the universal ribosomal protein uS10 family. In terms of assembly, part of the 30S ribosomal subunit.

In terms of biological role, involved in the binding of tRNA to the ribosomes. The chain is Small ribosomal subunit protein uS10 from Natranaerobius thermophilus (strain ATCC BAA-1301 / DSM 18059 / JW/NM-WN-LF).